Reading from the N-terminus, the 406-residue chain is Tryptophan synthase beta chain (406 aa).

Lys-99 carries the N6-(pyridoxal phosphate)lysine modification.

It belongs to the TrpB family. In terms of assembly, tetramer of two alpha and two beta chains. It depends on pyridoxal 5'-phosphate as a cofactor.

The catalysed reaction is (1S,2R)-1-C-(indol-3-yl)glycerol 3-phosphate + L-serine = D-glyceraldehyde 3-phosphate + L-tryptophan + H2O. It participates in amino-acid biosynthesis; L-tryptophan biosynthesis; L-tryptophan from chorismate: step 5/5. Its function is as follows. The beta subunit is responsible for the synthesis of L-tryptophan from indole and L-serine. The polypeptide is Tryptophan synthase beta chain (Brucella abortus (strain 2308)).